The sequence spans 115 residues: Movement protein TGB2 (115 aa).

Over M1–N13 the chain is Cytoplasmic. The chain crosses the membrane as a helical span at residues S14–L34. The Lumenal portion of the chain corresponds to S35–S74. Residues L75 to G95 traverse the membrane as a helical segment. Residues S96–N115 are Cytoplasmic-facing.

The protein belongs to the Tymovirales TGBp2 protein family.

Its subcellular location is the host endoplasmic reticulum membrane. Its function is as follows. Plays a role in viral cell-to-cell propagation, by facilitating genome transport to neighboring plant cells through plasmosdesmata,. This Potato virus X (strain HB) (PVX) protein is Movement protein TGB2.